A 413-amino-acid polypeptide reads, in one-letter code: MKIYLVGGAVRDALLGLPVKDKDWVVVGATPQEMLDAGYQQVGRDFPVFLHPQTHEEYALARTERKSGSGYTGFTCYAAPDVTLEADLQRRDLTINALARDDDGQIIDPYHGRRDLEARLLRHVSPAFGEDPLRVLRVARFAARYAHLSFRIADETLALMREMTAAGELEHLTPERVWKETENALTTRNPQVYFQVLRDCGALRVLFPEIDALFGVPAPAKWHPEIDTGVHTLMTLSMAAMLSPQLDVRFATLCHDLGKGLTPKNLWPRHHGHGPAGVKLVEQLCQRLRVPNDLRDLAKLVAEYHDLIHTFPILQPKTIVKLFDAIDAWRKPQRVEQIALTSEADVRGRTGFEASDYPQGRWLREAWQVAQAVPTKEVVEAGFKGIEIREELTKRRIAAVANWKEKRCPPPAS.

ATP is bound by residues G8 and R11. 2 residues coordinate CTP: G8 and R11. 2 residues coordinate Mg(2+): D21 and D23. ATP contacts are provided by R91, R137, and R140. Residues R91, R137, and R140 each contribute to the CTP site. The 102-residue stretch at 228–329 (TGVHTLMTLS…VKLFDAIDAW (102 aa)) folds into the HD domain.

Belongs to the tRNA nucleotidyltransferase/poly(A) polymerase family. Bacterial CCA-adding enzyme type 1 subfamily. In terms of assembly, monomer. Can also form homodimers and oligomers. Mg(2+) is required as a cofactor. Ni(2+) serves as cofactor.

The catalysed reaction is a tRNA precursor + 2 CTP + ATP = a tRNA with a 3' CCA end + 3 diphosphate. It catalyses the reaction a tRNA with a 3' CCA end + 2 CTP + ATP = a tRNA with a 3' CCACCA end + 3 diphosphate. Catalyzes the addition and repair of the essential 3'-terminal CCA sequence in tRNAs without using a nucleic acid template. Adds these three nucleotides in the order of C, C, and A to the tRNA nucleotide-73, using CTP and ATP as substrates and producing inorganic pyrophosphate. tRNA 3'-terminal CCA addition is required both for tRNA processing and repair. Also involved in tRNA surveillance by mediating tandem CCA addition to generate a CCACCA at the 3' terminus of unstable tRNAs. While stable tRNAs receive only 3'-terminal CCA, unstable tRNAs are marked with CCACCA and rapidly degraded. This is Multifunctional CCA protein from Salmonella choleraesuis (strain SC-B67).